The primary structure comprises 244 residues: Ribonuclease PH (244 aa).

Phosphate contacts are provided by residues arginine 90 and 128-130; that span reads GTR.

This sequence belongs to the RNase PH family. In terms of assembly, homohexameric ring arranged as a trimer of dimers.

It catalyses the reaction tRNA(n+1) + phosphate = tRNA(n) + a ribonucleoside 5'-diphosphate. Its function is as follows. Phosphorolytic 3'-5' exoribonuclease that plays an important role in tRNA 3'-end maturation. Removes nucleotide residues following the 3'-CCA terminus of tRNAs; can also add nucleotides to the ends of RNA molecules by using nucleoside diphosphates as substrates, but this may not be physiologically important. Probably plays a role in initiation of 16S rRNA degradation (leading to ribosome degradation) during starvation. This is Ribonuclease PH from Prochlorococcus marinus (strain MIT 9313).